A 605-amino-acid polypeptide reads, in one-letter code: MRHFVTFVVGFLLSWGFLSSLQDPPSCRCRPWEPCWPDSHQWTSLNASIDGNLVHVQPVGSVCHDPHYDAVACGDVLDLSRNSGWRASNPATLQDWIWETGSGDNESCLLVSSSERPQEIPCHQGRLPLYSAAVKSTAHVQGVIRFAKDHNLRLVIKNTGHDATGRSAAPDSLQIHTYFLKDIHYDDNFLVHGDATGSGPAVTLGAGVVHSEVYKHGIDHKYSVVGGECPTVGIVGGFLQGGGVSSWSGFTRGLAVDNVLEYQVVTANAELVIANEHQNQDLFWALRGGGGGTFGVVTQATVRAFPDDPTVVSTLVLSSTRADTSFWVKAISRLLSILRSCNQQNVHGQLIITRPSVDILNAGLTLHFSNMTNVLHAETLLQPHIASLSEDQISTTLTSKFVANINSELRLDADIHPRGIGTLQTSMMISNELFGSSEGPLTVAQVFGKLPIGPNDLLFTSNLGGCIAANKGLDTAIHPAWRSSAHLVTYVRSVEPSIEAKKLALKEITNKYMPILYSMQPSFKVSYRNLGDPNEKNYQEVFWGEKVYKRLASIKAKLDPDGLFISKLGVGSEDWDTEGMCYQPQNRVSQPLRSLKYFLSVLKDT.

Residues 1-20 (MRHFVTFVVGFLLSWGFLSS) form the signal peptide. N-linked (GlcNAc...) asparagine glycans are attached at residues Asn-46 and Asn-105. The FAD-binding PCMH-type domain occupies 122-307 (CHQGRLPLYS…TQATVRAFPD (186 aa)). N-linked (GlcNAc...) asparagine glycosylation occurs at Asn-370.

This sequence belongs to the oxygen-dependent FAD-linked oxidoreductase family. Requires FAD as cofactor.

It functions in the pathway alkaloid biosynthesis; ergot alkaloid biosynthesis. In terms of biological role, FAD-linked oxidoreductase; part of the gene cluster that mediates the biosynthesis of fungal ergot alkaloid ergovaline, the predominant ergopeptine product in E.festucae var. lolii. DmaW catalyzes the first step of ergot alkaloid biosynthesis by condensing dimethylallyl diphosphate (DMAP) and tryptophan to form 4-dimethylallyl-L-tryptophan. The second step is catalyzed by the methyltransferase easF that methylates 4-dimethylallyl-L-tryptophan in the presence of S-adenosyl-L-methionine, resulting in the formation of 4-dimethylallyl-L-abrine. The catalase easC and the FAD-dependent oxidoreductase easE then transform 4-dimethylallyl-L-abrine to chanoclavine-I which is further oxidized by easD in the presence of NAD(+), resulting in the formation of chanoclavine-I aldehyde. Agroclavine dehydrogenase easG then mediates the conversion of chanoclavine-I aldehyde to agroclavine via a non-enzymatic adduct reaction: the substrate is an iminium intermediate that is formed spontaneously from chanoclavine-I aldehyde in the presence of glutathione. The presence of easA is not required to complete this reaction. Further conversion of agroclavine to paspalic acid is a two-step process involving oxidation of agroclavine to elymoclavine and of elymoclavine to paspalic acid, the second step being performed by the elymoclavine oxidase cloA. Paspalic acid is then further converted to D-lysergic acid. Ergovaline is assembled from D-lysergic acid and three different amino acids by the D-lysergyl-peptide-synthetase composed of a monomudular (lpsB) and a trimodular (lpsA) nonribosomal peptide synthetase subunit. In Epichloe festucae var. lolii (Neotyphodium lolii), this protein is FAD-linked oxidoreductase easE.